A 448-amino-acid chain; its full sequence is Trigger factor (448 aa).

Residues 172–257 (GDRVTVDFVG…MKKIEWPHLP (86 aa)) enclose the PPIase FKBP-type domain.

Belongs to the FKBP-type PPIase family. Tig subfamily.

Its subcellular location is the cytoplasm. It catalyses the reaction [protein]-peptidylproline (omega=180) = [protein]-peptidylproline (omega=0). In terms of biological role, involved in protein export. Acts as a chaperone by maintaining the newly synthesized protein in an open conformation. Functions as a peptidyl-prolyl cis-trans isomerase. The sequence is that of Trigger factor from Burkholderia cenocepacia (strain HI2424).